The chain runs to 949 residues: ATPase 1, plasma membrane-type (949 aa).

Ser2 is subject to N-acetylserine. At 2 to 61 the chain is on the cytoplasmic side; it reads SGLEDIKNETVDLEKIPIEEVFQQLKCTREGLTTQEGEDRIVIFGPNKLEEKKESKILKF. Residues 62–81 traverse the membrane as a helical segment; that stretch reads LGFMWNPLSWVMEAAALMAI. Topologically, residues 82–93 are extracellular; sequence ALANGDNRPPDW. Residues 94-114 form a helical membrane-spanning segment; the sequence is QDFVGIICLLVINSTISFIEE. Over 115–243 the chain is Cytoplasmic; it reads NNAGNAAAAL…GHFQKVLTSI (129 aa). Residues 244 to 264 form a helical membrane-spanning segment; it reads GNFCICSIAIGIAIEIVVMYP. Residues 265–273 lie on the Extracellular side of the membrane; the sequence is IQHRKYRDG. The chain crosses the membrane as a helical span at residues 274-291; the sequence is IDNLLVLLIGGIPIAMPT. Residues 292–643 are Cytoplasmic-facing; sequence VLSVTMAIGS…TSRAIFQRMK (352 aa). Catalysis depends on Asp329, which acts as the 4-aspartylphosphate intermediate. Asp588 and Asp592 together coordinate Mg(2+). Residues 644–665 form a helical membrane-spanning segment; sequence NYTIYAVSITIRIVFGFMLIAL. At 666–670 the chain is on the extracellular side; sequence IWEFD. A helical transmembrane segment spans residues 671-693; that stretch reads FSAFMVLIIAILNDGTIMTISKD. Residues 694-709 are Cytoplasmic-facing; sequence RVKPSPTPDSWKLKEI. A helical transmembrane segment spans residues 710 to 730; the sequence is FATGIVLGGYQAIMSVIFFWA. The Extracellular portion of the chain corresponds to 731–751; sequence AHKTDFFSDKFGVRSIRDNND. A helical membrane pass occupies residues 752 to 772; sequence ELMGAVYLQVSIISQALIFVT. Residues 773-784 lie on the Cytoplasmic side of the membrane; it reads RSRSWSFVERPG. Residues 785-805 traverse the membrane as a helical segment; it reads ALLMIAFVIAQLVATLIAVYA. Residues 806-813 are Extracellular-facing; that stretch reads DWTFAKVK. A helical transmembrane segment spans residues 814–834; the sequence is GIGWGWAGVIWIYSIVTYFPQ. Residues 835 to 949 lie on the Cytoplasmic side of the membrane; the sequence is DILKFAIRYI…IDTAGHHYTV (115 aa). Position 881 is a phosphothreonine (Thr881). A phosphoserine mark is found at Ser899 and Ser931. Positions 947–949 are interaction with 14-3-3 proteins; that stretch reads YTV. Thr948 carries the phosphothreonine modification.

Belongs to the cation transport ATPase (P-type) (TC 3.A.3) family. Type IIIA subfamily. Binds to 14-3-3 proteins. The binding is induced by phosphorylation of Thr-948. Binding to 14-3-3 proteins activates the H(+)-ATPase. Interacts with PPI1; this interaction promotes ATPase activity. Interacts with PSY1R. Part of a functional complex containing PSKR1, BAK1, CNGC17, and AHA. Interacts with CNGC17 and PSKR1. Triggered by SAUR9 via the phosphorylation of the C-terminal autoinhibitory domain. Interacts with AHA2. Binds to CBC1 and CBC2. Phosphorylated, probably by PHOT1 and PHOT2, at C-terminal Thr-948 in guard cells in response to blue light to induce stomatal opening. As to expression, expressed in guard cells, mesophyll cells, leaves and roots.

The protein localises to the cell membrane. It carries out the reaction ATP + H2O + H(+)(in) = ADP + phosphate + 2 H(+)(out). Phosphorylation on Thr residues is repressed by tyrphostin 9, sphingosine, GW5074 and BML-265. By contrast, the fungal phytotoxin fusicoccin (FC) promotes phosphorylation of Thr-948 independently to BHP, thus leading to large stomatal opening. Functionally, the plasma membrane H(+) ATPase of plants and fungi generates a proton gradient that drives the active transport of nutrients by H(+)-symport. The resulting external acidification and/or internal alkinization may mediate growth responses. Forms a functional cation-translocating unit with CNGC17 that is activated by PSKR1/BAK1 and possibly other BAK1/RLK complexes. Promotes stomatal opening in response to blue light. In Arabidopsis thaliana (Mouse-ear cress), this protein is ATPase 1, plasma membrane-type.